The primary structure comprises 379 residues: Cytochrome b (379 aa).

4 helical membrane-spanning segments follow: residues 33-53, 77-98, 113-133, and 178-198; these read FGSL…FLAM, WLIR…FIHV, WNIG…GYVL, and FFAF…VHLL. H83 and H97 together coordinate heme b. The heme b site is built by H182 and H196. An a ubiquinone-binding site is contributed by H201. The next 4 helical transmembrane spans lie at 226-246, 288-308, 320-340, and 347-367; these read TKDL…ALFF, LGGV…PLLN, VTQI…WIGG, and FTTI…ILIP.

This sequence belongs to the cytochrome b family. The cytochrome bc1 complex contains 11 subunits: 3 respiratory subunits (MT-CYB, CYC1 and UQCRFS1), 2 core proteins (UQCRC1 and UQCRC2) and 6 low-molecular weight proteins (UQCRH/QCR6, UQCRB/QCR7, UQCRQ/QCR8, UQCR10/QCR9, UQCR11/QCR10 and a cleavage product of UQCRFS1). This cytochrome bc1 complex then forms a dimer. The cofactor is heme b.

The protein localises to the mitochondrion inner membrane. Functionally, component of the ubiquinol-cytochrome c reductase complex (complex III or cytochrome b-c1 complex) that is part of the mitochondrial respiratory chain. The b-c1 complex mediates electron transfer from ubiquinol to cytochrome c. Contributes to the generation of a proton gradient across the mitochondrial membrane that is then used for ATP synthesis. The protein is Cytochrome b (MT-CYB) of Akodon reigi (Reig's grass mouse).